The following is a 452-amino-acid chain: Pup--protein ligase 1 (452 aa).

A Mg(2+)-binding site is contributed by Glu9. Arg53 is an ATP binding site. Residue Tyr55 participates in Mg(2+) binding. The active-site Proton acceptor is the Asp57. Glu63 is a Mg(2+) binding site. The ATP site is built by Thr66 and Trp419.

It belongs to the Pup ligase/Pup deamidase family. Pup-conjugating enzyme subfamily.

The catalysed reaction is ATP + [prokaryotic ubiquitin-like protein]-L-glutamate + [protein]-L-lysine = ADP + phosphate + N(6)-([prokaryotic ubiquitin-like protein]-gamma-L-glutamyl)-[protein]-L-lysine.. The protein operates within protein degradation; proteasomal Pup-dependent pathway. It participates in protein modification; protein pupylation. Its function is as follows. Catalyzes the covalent attachment of the prokaryotic ubiquitin-like protein modifier Pup to the proteasomal substrate proteins, thereby targeting them for proteasomal degradation. This tagging system is termed pupylation. The ligation reaction involves the side-chain carboxylate of the C-terminal glutamate of Pup and the side-chain amino group of a substrate lysine. This Rhodococcus erythropolis (Arthrobacter picolinophilus) protein is Pup--protein ligase 1.